Here is a 702-residue protein sequence, read N- to C-terminus: Exodeoxyribonuclease 1 (702 aa).

Positions 1–96 (MGIQGLLPQL…STESKRRDKR (96 aa)) are N-domain. Mg(2+) contacts are provided by D30, D78, E150, D152, D171, D173, and D227. Residues 114–247 (NAMDYFQKCV…ITAMKLVRRF (134 aa)) form an I-domain region. S372 is modified (phosphoserine). Disordered regions lie at residues 465 to 571 (SIQD…SQRS) and 660 to 685 (SFNS…SQAR). Over residues 474–498 (NSQSLEEPVSESQLSTQIPSSFITT) the composition is skewed to polar residues. 2 stretches are compositionally biased toward acidic residues: residues 500-518 (LEDD…SDIE) and 535-550 (NTDD…DYSE). The segment covering 558–571 (TSSTTSFPGSSQRS) has biased composition (low complexity). Residues 667–678 (LHEESKKRDIET) are compositionally biased toward basic and acidic residues.

The protein belongs to the XPG/RAD2 endonuclease family. EXO1 subfamily. Interacts with mismatch repair protein MSH2. The cofactor is Mg(2+).

It localises to the nucleus. With respect to regulation, inactivated by calcium and zinc ions. Functionally, 5'-&gt;3' double-stranded DNA exonuclease involved in mismatch repair and eventually also in mitotic recombination between direct repeats. Also has a minor role in the correction of large DNA mismatches that occur in the heteroduplex DNA during meiotic recombination at the HIS4 locus. The chain is Exodeoxyribonuclease 1 (EXO1) from Saccharomyces cerevisiae (strain ATCC 204508 / S288c) (Baker's yeast).